The primary structure comprises 75 residues: Chaplin-D (75 aa).

A signal peptide spans 1-23 (MKKSAAVVAGAIMALGMAAPAFA). One can recognise a Chaplin domain in the interval 34–74 (SPGVLSGNVIQVPVHVPVNVCGNSINVVGLLNPAFGNKCEN). Residues Cys-54 and Cys-72 are joined by a disulfide bond.

This sequence belongs to the chaplin family. Short chaplin subfamily.

Its subcellular location is the cell surface. It is found in the secreted. The protein resides in the cell wall. The protein localises to the fimbrium. Its function is as follows. One of 8 partially redundant surface-active proteins required for efficient formation of aerial mycelium; the short chaplins assemble into a hydrophobic, amyloidal fibrillar surface layer that envelopes and protects aerial hyphae and spores, presumably anchored to the long chaplins. Chaplins have an overlapping function with the surface-active SapB peptide; chaplins are essential on minimal medium while on rich medium both chaplins and SapB are required for efficient aerial hyphae formation. Chaplins are also involved in cell attachment to a hydrophobic surface. Forms amyloid fibrils in vitro probably composed of stacked beta-sheets, at low extracellular concentrations individually restores the ability to form aerial hyphae to a chaplin-deficient strain. A small chaplin extract (ChpD, ChpE, ChpF, ChpG and ChpH) self-assembles into 2 different amyloids; small fibrils at the air-water interface form an amphipathic membrane that resembles spore-surface structures involved in aerial hyphae formation, and hydrophilic fibrils in solution that resemble the fibers that attach cells to a hydrophobic surface. At the air-water interface the hydrophilic surface is in contact with water (probably equivalent to the peptidoglycan layer), while the hydrophobic face is exposed to the air, making the surface of the aerial hyphae hydrophobic. A minimal chaplin strain capable of forming aerial mycelium/hyphae on minimal medium contains ChpC, ChpE and ChpH. The strain also has restored rodlet formation on the hyphae surface. A second minimal chaplin strain with ChpA, ChpD and ChpE makes slightly less robust hyphae. A small chaplin extract applied to a chaplin-deficient strain restores aerial hyphae formation. The small chaplin extract forms an amyloid-like structure similar to that seen on the surface of cells without rodlets (rdlA-rdlB deletions), and is highly surface active, reducing surface tension from 72 to 26 mJ/m(2), which probably allows escape of hyphae from an aqueous environment into air. The protein is Chaplin-D of Streptomyces coelicolor (strain ATCC BAA-471 / A3(2) / M145).